Reading from the N-terminus, the 66-residue chain is KDGYLVGNDGCKYSCLTRPGHYCASECSRVKGKDGYCYAWMACYCYNMPNWVKTWSRATNKCGKRK.

The region spanning lysine 1–glycine 63 is the LCN-type CS-alpha/beta domain. 4 cysteine pairs are disulfide-bonded: cysteine 11–cysteine 62, cysteine 15–cysteine 37, cysteine 23–cysteine 43, and cysteine 27–cysteine 45. Cysteine 62 is subject to Cysteine amide.

Belongs to the long (4 C-C) scorpion toxin superfamily. Sodium channel inhibitor family. Beta subfamily. Expressed by the venom gland.

It localises to the secreted. Its function is as follows. Beta toxins bind voltage-independently at site-4 of sodium channels (Nav) and shift the voltage of activation toward more negative potentials thereby affecting sodium channel activation and promoting spontaneous and repetitive firing. The sequence is that of Toxin Tppa2 from Tityus pachyurus (Colombian scorpion).